The sequence spans 444 residues: C4-dicarboxylate transport protein (444 aa).

Helical transmembrane passes span 17 to 37, 57 to 77, 92 to 112, 139 to 159, 161 to 181, 201 to 221, 234 to 254, 320 to 340, and 368 to 388; these read PFYT…ILLG, LVKM…IAGM, LYFL…ANVV, EQSI…GAFA, GDIL…AMVG, LVAI…AFTI, MLIG…LGAV, IYMT…LSWG, and AATL…ILGI.

It belongs to the dicarboxylate/amino acid:cation symporter (DAACS) (TC 2.A.23) family.

The protein localises to the cell inner membrane. In terms of biological role, responsible for the transport of dicarboxylates such as succinate, fumarate, and malate from the periplasm across the membrane. This Rhizobium johnstonii (strain DSM 114642 / LMG 32736 / 3841) (Rhizobium leguminosarum bv. viciae) protein is C4-dicarboxylate transport protein.